The sequence spans 373 residues: GDSL esterase/lipase LIP-4 (373 aa).

The first 32 residues, 1–32 (MATLFLYSNTFSFFFITLVSLALLILRQPSRA), serve as a signal peptide directing secretion. Residue Ser-47 is the Nucleophile of the active site. Asn-93 is a glycosylation site (N-linked (GlcNAc...) asparagine). Residues Asp-339 and His-342 contribute to the active site.

It belongs to the 'GDSL' lipolytic enzyme family.

The protein localises to the secreted. This is GDSL esterase/lipase LIP-4 (LIP4) from Arabidopsis thaliana (Mouse-ear cress).